The primary structure comprises 309 residues: Homoserine kinase (309 aa).

91–101 (PIGSGLGSSAC) lines the ATP pocket.

It belongs to the GHMP kinase family. Homoserine kinase subfamily.

It is found in the cytoplasm. The enzyme catalyses L-homoserine + ATP = O-phospho-L-homoserine + ADP + H(+). The protein operates within amino-acid biosynthesis; L-threonine biosynthesis; L-threonine from L-aspartate: step 4/5. In terms of biological role, catalyzes the ATP-dependent phosphorylation of L-homoserine to L-homoserine phosphate. This Salmonella paratyphi B (strain ATCC BAA-1250 / SPB7) protein is Homoserine kinase.